The following is a 159-amino-acid chain: MNIKIVCVGKLKEKYFKDAIAEYQKRLSRFAKVTIVQVPDEKAPEKFSEAEDEKVKEIEGQRILSKIKDKEYVYVTAIKGKQRSSEEFAKEIQDLGTYGHSDITFVIGGSLGTSDAVNKRADDLISFGKLTMPHQLMRVVLIEQIYRAFMINSGSPYHK.

Residues glycine 108 and phenylalanine 127–methionine 132 contribute to the S-adenosyl-L-methionine site.

Belongs to the RNA methyltransferase RlmH family. Homodimer.

The protein localises to the cytoplasm. It catalyses the reaction pseudouridine(1915) in 23S rRNA + S-adenosyl-L-methionine = N(3)-methylpseudouridine(1915) in 23S rRNA + S-adenosyl-L-homocysteine + H(+). Functionally, specifically methylates the pseudouridine at position 1915 (m3Psi1915) in 23S rRNA. The protein is Ribosomal RNA large subunit methyltransferase H of Lactobacillus acidophilus (strain ATCC 700396 / NCK56 / N2 / NCFM).